Consider the following 127-residue polypeptide: Protein ApaG (127 aa).

Residues 2–127 enclose the ApaG domain; it reads SELVEHIQVH…FRLAGPNQVH (126 aa).

This chain is Protein ApaG, found in Chromohalobacter salexigens (strain ATCC BAA-138 / DSM 3043 / CIP 106854 / NCIMB 13768 / 1H11).